The chain runs to 556 residues: Formate--tetrahydrofolate ligase (556 aa).

64–71 (TPAGEGKT) serves as a coordination point for ATP.

This sequence belongs to the formate--tetrahydrofolate ligase family.

It catalyses the reaction (6S)-5,6,7,8-tetrahydrofolate + formate + ATP = (6R)-10-formyltetrahydrofolate + ADP + phosphate. It functions in the pathway one-carbon metabolism; tetrahydrofolate interconversion. This chain is Formate--tetrahydrofolate ligase, found in Actinobacillus pleuropneumoniae serotype 5b (strain L20).